We begin with the raw amino-acid sequence, 131 residues long: Small ribosomal subunit protein uS8 (131 aa).

It belongs to the universal ribosomal protein uS8 family. Part of the 30S ribosomal subunit. Contacts proteins S5 and S12.

In terms of biological role, one of the primary rRNA binding proteins, it binds directly to 16S rRNA central domain where it helps coordinate assembly of the platform of the 30S subunit. The polypeptide is Small ribosomal subunit protein uS8 (Phocaeicola vulgatus (strain ATCC 8482 / DSM 1447 / JCM 5826 / CCUG 4940 / NBRC 14291 / NCTC 11154) (Bacteroides vulgatus)).